Consider the following 246-residue polypeptide: Large ribosomal subunit protein uL30-like 1 (246 aa).

Residue Ser-54 is modified to Phosphoserine.

Belongs to the universal ribosomal protein uL30 family.

The chain is Large ribosomal subunit protein uL30-like 1 (Rpl7l1) from Mus musculus (Mouse).